A 517-amino-acid chain; its full sequence is Xylosidase/arabinosidase (517 aa).

The active-site Proton acceptor is D15. E185 serves as the catalytic Proton donor.

The protein belongs to the glycosyl hydrolase 43 family.

It carries out the reaction Hydrolysis of (1-&gt;4)-beta-D-xylans, to remove successive D-xylose residues from the non-reducing termini.. It catalyses the reaction Hydrolysis of terminal non-reducing alpha-L-arabinofuranoside residues in alpha-L-arabinosides.. Has a 1.6-fold higher activity as an arabinosidase than as a beta-xylosidase when tested on the substrates nitrophenyl-beta-D-xylopyranoside and P-nitrophenyl-alpha-L-arabinofuranoside. The chain is Xylosidase/arabinosidase (xylB) from Butyrivibrio fibrisolvens.